Consider the following 319-residue polypeptide: Small ribosomal subunit protein RACK1 (319 aa).

An N-acetylalanine modification is found at A2. WD repeat units follow at residues 15-55 (GHNG…QKFG), 63-102 (GHSH…TYQR), 105-145 (GHKS…ATLL), 147-191 (HNDW…IEAD), 194-233 (GHNS…AMYT), 235-275 (SAQD…DDLR), and 284-319 (AAEP…MTAN). Residues K46 and K53 each participate in a glycyl lysine isopeptide (Lys-Gly) (interchain with G-Cter in ubiquitin) cross-link. At T96 the chain carries Phosphothreonine. Glycyl lysine isopeptide (Lys-Gly) (interchain with G-Cter in ubiquitin) cross-links involve residues K107, K137, and K161. Phosphothreonine is present on T168.

Belongs to the WD repeat G protein beta family. Ribosomal protein RACK1 subfamily. Component of the small ribosomal subunit (SSU). Mature yeast ribosomes consist of a small (40S) and a large (60S) subunit. The 40S small subunit contains 1 molecule of ribosomal RNA (18S rRNA) and 33 different proteins (encoded by 57 genes). The large 60S subunit contains 3 rRNA molecules (25S, 5.8S and 5S rRNA) and 46 different proteins (encoded by 81 genes). RACK1 is located at the head of the SSU in the vicinity of the mRNA exit channel. RACK1 interacts with the mRNA-binding protein SCP16. RACK1 also exists simultaneously as a homodimer in a cytosolic non-ribosome-bound form.

The protein localises to the cytoplasm. Functionally, component of the ribosome, a large ribonucleoprotein complex responsible for the synthesis of proteins in the cell. The small ribosomal subunit (SSU) binds messenger RNAs (mRNAs) and translates the encoded message by selecting cognate aminoacyl-transfer RNA (tRNA) molecules. The large subunit (LSU) contains the ribosomal catalytic site termed the peptidyl transferase center (PTC), which catalyzes the formation of peptide bonds, thereby polymerizing the amino acids delivered by tRNAs into a polypeptide chain. The nascent polypeptides leave the ribosome through a tunnel in the LSU and interact with protein factors that function in enzymatic processing, targeting, and the membrane insertion of nascent chains at the exit of the ribosomal tunnel. Located at the head of the 40S ribosomal subunit in the vicinity of the mRNA exit channel, RACK1 serves as a scaffold protein that can recruit other proteins to the ribosome. Involved in induction of the ribosome quality control (RQC) pathway; a pathway that degrades nascent peptide chains during problematic translation. Involved in the negative regulation of translation of a specific subset of proteins. This Saccharomyces cerevisiae (strain ATCC 204508 / S288c) (Baker's yeast) protein is Small ribosomal subunit protein RACK1.